We begin with the raw amino-acid sequence, 465 residues long: Argininosuccinate lyase (465 aa).

The protein belongs to the lyase 1 family. Argininosuccinate lyase subfamily.

The protein localises to the cytoplasm. It catalyses the reaction 2-(N(omega)-L-arginino)succinate = fumarate + L-arginine. It participates in amino-acid biosynthesis; L-arginine biosynthesis; L-arginine from L-ornithine and carbamoyl phosphate: step 3/3. The chain is Argininosuccinate lyase from Aromatoleum aromaticum (strain DSM 19018 / LMG 30748 / EbN1) (Azoarcus sp. (strain EbN1)).